We begin with the raw amino-acid sequence, 458 residues long: Elongation factor 1-alpha (458 aa).

The residue at position 2 (Gly2) is a N,N,N-trimethylglycine. Lys3 carries the post-translational modification N6,N6-dimethyllysine; alternate. At Lys3 the chain carries N6-methyllysine; alternate. A tr-type G domain is found at Lys5 to Thr240. The tract at residues Gly14–Ser21 is G1. Gly14–Ser21 serves as a coordination point for GTP. Position 30 is an N6-methyllysine (Lys30). The interval Gly70 to Asp74 is G2. Lys79 bears the N6,N6,N6-trimethyllysine mark. Positions Asp91–Gly94 are G3. GTP-binding positions include Asp91–His95 and Asn153–Asp156. Residues Asn153 to Asp156 are G4. The segment at Ser192–Trp194 is G5. Lys316 carries the N6,N6-dimethyllysine; alternate modification. Residue Lys316 is modified to N6-methyllysine; alternate. Position 390 is an N6-methyllysine (Lys390).

This sequence belongs to the TRAFAC class translation factor GTPase superfamily. Classic translation factor GTPase family. EF-Tu/EF-1A subfamily.

Its subcellular location is the cytoplasm. It participates in protein biosynthesis; polypeptide chain elongation. In terms of biological role, this protein promotes the GTP-dependent binding of aminoacyl-tRNA to the A-site of ribosomes during protein biosynthesis. The polypeptide is Elongation factor 1-alpha (TEF1) (Meyerozyma guilliermondii (strain ATCC 6260 / CBS 566 / DSM 6381 / JCM 1539 / NBRC 10279 / NRRL Y-324) (Yeast)).